Here is a 409-residue protein sequence, read N- to C-terminus: Dual-specificity RNA methyltransferase RlmN (409 aa).

E117 acts as the Proton acceptor in catalysis. One can recognise a Radical SAM core domain in the interval 128 to 377; it reads LNGRKTLCIS…CTIRQTRGDD (250 aa). C135 and C382 are joined by a disulfide. [4Fe-4S] cluster contacts are provided by C142, C146, and C149. S-adenosyl-L-methionine is bound by residues 205-206, S237, 259-261, and N339; these read GE and SLH. Residue C382 is the S-methylcysteine intermediate of the active site.

The protein belongs to the radical SAM superfamily. RlmN family. [4Fe-4S] cluster is required as a cofactor.

It localises to the cytoplasm. It carries out the reaction adenosine(2503) in 23S rRNA + 2 reduced [2Fe-2S]-[ferredoxin] + 2 S-adenosyl-L-methionine = 2-methyladenosine(2503) in 23S rRNA + 5'-deoxyadenosine + L-methionine + 2 oxidized [2Fe-2S]-[ferredoxin] + S-adenosyl-L-homocysteine. The catalysed reaction is adenosine(37) in tRNA + 2 reduced [2Fe-2S]-[ferredoxin] + 2 S-adenosyl-L-methionine = 2-methyladenosine(37) in tRNA + 5'-deoxyadenosine + L-methionine + 2 oxidized [2Fe-2S]-[ferredoxin] + S-adenosyl-L-homocysteine. Specifically methylates position 2 of adenine 2503 in 23S rRNA and position 2 of adenine 37 in tRNAs. m2A2503 modification seems to play a crucial role in the proofreading step occurring at the peptidyl transferase center and thus would serve to optimize ribosomal fidelity. In Psychrobacter arcticus (strain DSM 17307 / VKM B-2377 / 273-4), this protein is Dual-specificity RNA methyltransferase RlmN.